The sequence spans 130 residues: Glycine cleavage system H protein (130 aa).

The Lipoyl-binding domain maps to 23–105; it reads IGIIGITDFA…YGKGWMIKVE (83 aa). Lysine 64 carries the N6-lipoyllysine modification.

It belongs to the GcvH family. The glycine cleavage system is composed of four proteins: P, T, L and H. (R)-lipoate is required as a cofactor.

The glycine cleavage system catalyzes the degradation of glycine. The H protein shuttles the methylamine group of glycine from the P protein to the T protein. This chain is Glycine cleavage system H protein, found in Carboxydothermus hydrogenoformans (strain ATCC BAA-161 / DSM 6008 / Z-2901).